Reading from the N-terminus, the 66-residue chain is Phylloseptin-S3 (66 aa).

An N-terminal signal peptide occupies residues 1–22; the sequence is MAFLKKSLFLVLFLGLVSLSIC. Residues 23–46 constitute a propeptide that is removed on maturation; it reads EEEKRETEEEEHDQEEDDKSEEKR. The tract at residues 25 to 44 is disordered; it reads EKRETEEEEHDQEEDDKSEE. The span at 30–41 shows a compositional bias: acidic residues; it reads EEEEHDQEEDDK. Residue F65 is modified to Phenylalanine amide.

This sequence belongs to the frog skin active peptide (FSAP) family. Phylloseptin subfamily. As to expression, expressed by the skin glands.

Its subcellular location is the secreted. The protein resides in the target cell membrane. Its function is as follows. Antimicrobial peptide with activity against the Gram-positive S.pyogenes (MIC=12.5 uM), but not against all other bacteria tested (both Gram-positive and Gram-negative). Does not show activity against fungi, and against Leishmania species. In Phyllomedusa sauvagei (Sauvage's leaf frog), this protein is Phylloseptin-S3.